The primary structure comprises 174 residues: RxLR effector protein 207 (174 aa).

An N-terminal signal peptide occupies residues 1–20; it reads MSKVFLLLVLSVFALVSCDA. The RxLR-dEER motif lies at 46–62; that stretch reads RMLRAQEEPTNAADEER. Residues 82–99 are disordered; it reads VTNSKLVQSMNNKLASLT.

It belongs to the RxLR effector family. In terms of assembly, interacts with Nicotiana benthamiana ACD11, BPA1 (binding partner of ACD11), as well as BPA-like proteins BPL1, BPL2, BPL3 and BPL4.

It localises to the secreted. It is found in the host cell membrane. In terms of biological role, secreted effector that activates ROS-mediated cell death in plant host and is essential for virulence. Plays a role in the transition from the biotrophic to necrotrophic stage. Associates with and promotes the degradation of Nicotiana benthamiana BPA1, BPL1, BPL2, and BPL4 to disrupt ACD11 stabilization in a 26S proteasome-dependent manner. This chain is RxLR effector protein 207, found in Phytophthora capsici.